The sequence spans 199 residues: Twist-related protein (199 aa).

The interval 1–43 (MQEHQLSRVTSGNKKKYQSFDDESRDEKRMKCDSTDKLESNSN) is disordered. Residues 25-39 (RDEKRMKCDSTDKLE) are compositionally biased toward basic and acidic residues. The bHLH domain occupies 51-102 (THRVIANIRERQRTQALNQSFSTLRKIIPTLPSDKLSKIQTLRLAAMYIDFL).

In terms of assembly, efficient DNA binding requires dimerization with another bHLH protein. Homodimer. In terms of tissue distribution, expression is seen at the point of medusa formation in the ectodermal and endodermal bud tissues, and in the entocodon which gives rise to all smooth and striated muscle cells. After the subumbrellar plate differentiates from the endoderm, strong expression is detected until the medusa detaches from the gonzoid. Expression is observed in the distal part of the medusa but diminishes in entocodon-derived muscles as the tissues differentiate, with expression disappearing completely after stage 8. In later stages expression is seen in the distal and proximal parts of the bud and depending on state of maturity, in the developing gonadal tissue.

It localises to the nucleus. Functionally, probable transcription factor, which may be responsible for the formation of myoepithelial cells in early muscle development in larva and the formation of non-muscle tissues in later bud stages and mesoderm-like structures in the medusa. This is Twist-related protein from Podocoryna carnea (Hydrozoan).